The sequence spans 325 residues: Acetyl-coenzyme A carboxylase carboxyl transferase subunit alpha (325 aa).

One can recognise a CoA carboxyltransferase C-terminal domain in the interval 44–298 (QLEARADQLR…KAAIQDNLQA (255 aa)).

This sequence belongs to the AccA family. Acetyl-CoA carboxylase is a heterohexamer composed of biotin carboxyl carrier protein (AccB), biotin carboxylase (AccC) and two subunits each of ACCase subunit alpha (AccA) and ACCase subunit beta (AccD).

The protein localises to the cytoplasm. It catalyses the reaction N(6)-carboxybiotinyl-L-lysyl-[protein] + acetyl-CoA = N(6)-biotinyl-L-lysyl-[protein] + malonyl-CoA. The protein operates within lipid metabolism; malonyl-CoA biosynthesis; malonyl-CoA from acetyl-CoA: step 1/1. Its function is as follows. Component of the acetyl coenzyme A carboxylase (ACC) complex. First, biotin carboxylase catalyzes the carboxylation of biotin on its carrier protein (BCCP) and then the CO(2) group is transferred by the carboxyltransferase to acetyl-CoA to form malonyl-CoA. The sequence is that of Acetyl-coenzyme A carboxylase carboxyl transferase subunit alpha from Picosynechococcus sp. (strain ATCC 27264 / PCC 7002 / PR-6) (Agmenellum quadruplicatum).